A 512-amino-acid polypeptide reads, in one-letter code: Gamma-aminobutyric acid receptor subunit beta-2 (512 aa).

The signal sequence occupies residues 1–25 (MWRVRKRGYFGIWSFPLIIAAVCAQ). Topologically, residues 26 to 244 (SVNDPSNMSL…SFKLKRNIGY (219 aa)) are extracellular. 2 N-linked (GlcNAc...) asparagine glycosylation sites follow: Asn32 and Asn104. Tyr121 contacts histamine. An intrachain disulfide couples Cys160 to Cys174. The N-linked (GlcNAc...) asparagine glycan is linked to Asn173. Residues 180-181 (SY) and Thr226 contribute to the histamine site. Tyr181 and Thr226 together coordinate 4-aminobutanoate. 3 helical membrane-spanning segments follow: residues 245–266 (FILQ…SFWI), 270–292 (ASAA…NTHL), and 304–326 (AIDM…YALV). Over 327–489 (NYIFFGRGPQ…DLTDVNAIDR (163 aa)) the chain is Cytoplasmic. The residue at position 441 (Tyr441) is a Phosphotyrosine. The helical transmembrane segment at 490 to 511 (WSRIFFPVVFSFFNIVYWLYYV) threads the bilayer.

This sequence belongs to the ligand-gated ion channel (TC 1.A.9) family. Gamma-aminobutyric acid receptor (TC 1.A.9.5) subfamily. GABRB2 sub-subfamily. Heteropentamer, formed by a combination of alpha (GABRA1-6), beta (GABRB1-3), gamma (GABRG1-3), delta (GABRD), epsilon (GABRE), rho (GABRR1-3), pi (GABRP) and theta (GABRQ) chains, each subunit exhibiting distinct physiological and pharmacological properties. Interacts with UBQLN1. May interact with KIF21B. Identified in a complex of 720 kDa composed of LHFPL4, NLGN2, GABRA1, GABRB2, GABRG2 and GABRB3. In terms of processing, glycosylated.

The protein resides in the postsynaptic cell membrane. It is found in the cell membrane. The protein localises to the cytoplasmic vesicle. The catalysed reaction is chloride(in) = chloride(out). Its activity is regulated as follows. Allosterically activated by benzodiazepines and the anesthetic etomidate. Inhibited by the antagonist bicuculline. Potentiated by histamine. Functionally, beta subunit of the heteropentameric ligand-gated chloride channel gated by gamma-aminobutyric acid (GABA), a major inhibitory neurotransmitter in the brain. GABA-gated chloride channels, also named GABA(A) receptors (GABAAR), consist of five subunits arranged around a central pore and contain GABA active binding site(s) located at the alpha and beta subunit interface(s). When activated by GABA, GABAARs selectively allow the flow of chloride anions across the cell membrane down their electrochemical gradient. Chloride influx into the postsynaptic neuron following GABAAR opening decreases the neuron ability to generate a new action potential, thereby reducing nerve transmission. GABAARs containing alpha-1 and beta-2 or -3 subunits exhibit synaptogenic activity; the gamma-2 subunit being necessary but not sufficient to induce rapid synaptic contacts formation. Extrasynaptic beta-2 receptors contribute to the tonic GABAergic inhibition. Beta-containing GABAARs can simultaneously bind GABA and histamine where histamine binds at the interface of two neighboring beta subunits, which may be involved in the regulation of sleep and wakefulness. The chain is Gamma-aminobutyric acid receptor subunit beta-2 from Mus musculus (Mouse).